We begin with the raw amino-acid sequence, 263 residues long: Glutathione S-transferase F8, chloroplastic (263 aa).

The transit peptide at 1 to 49 (MGAIQARLPLFLSPPSIKHHTFLHSSSSNSNFKIRSNKSSSSSSSSIIM) directs the protein to the chloroplast. One can recognise a GST N-terminal domain in the interval 50 to 131 (ASIKVHGVPM…YLAEEYSEKG (82 aa)). Glutathione is bound by residues 60–61 (ST), 89–90 (HK), 102–103 (QI), and 115–116 (ES). The region spanning 139–263 (CKKVKATTNV…WAKVIDLQKQ (125 aa)) is the GST C-terminal domain. A Phosphothreonine modification is found at Thr177.

The protein belongs to the GST superfamily. Phi family. Isoform 1 is predominantly expressed in leaves and isoform 2 in roots.

It is found in the plastid. It localises to the chloroplast. The protein resides in the cytoplasm. The protein localises to the cytosol. It carries out the reaction RX + glutathione = an S-substituted glutathione + a halide anion + H(+). Functionally, in vitro, possesses glutathione S-transferase activity toward 1-chloro-2,4-dinitrobenzene (CDNB) and glutathione peroxidase activity toward cumene hydroperoxide and linoleic acid-13-hydroperoxide. May be involved in the conjugation of reduced glutathione to a wide number of exogenous and endogenous hydrophobic electrophiles and have a detoxification role against certain herbicides. This Arabidopsis thaliana (Mouse-ear cress) protein is Glutathione S-transferase F8, chloroplastic (GSTF8).